The following is a 169-amino-acid chain: Ureidoglycolate lyase (169 aa).

The protein belongs to the ureidoglycolate lyase family. Homodimer. Requires Ni(2+) as cofactor.

The enzyme catalyses (S)-ureidoglycolate = urea + glyoxylate. It functions in the pathway nitrogen metabolism; (S)-allantoin degradation. Catalyzes the catabolism of the allantoin degradation intermediate (S)-ureidoglycolate, generating urea and glyoxylate. Involved in the utilization of allantoin as nitrogen source. In Pseudomonas paraeruginosa (strain DSM 24068 / PA7) (Pseudomonas aeruginosa (strain PA7)), this protein is Ureidoglycolate lyase.